Here is a 129-residue protein sequence, read N- to C-terminus: Glycine cleavage system H protein (129 aa).

The 83-residue stretch at His-24–Ala-106 folds into the Lipoyl-binding domain. The residue at position 65 (Lys-65) is an N6-lipoyllysine.

This sequence belongs to the GcvH family. As to quaternary structure, the glycine cleavage system is composed of four proteins: P, T, L and H. The cofactor is (R)-lipoate.

In terms of biological role, the glycine cleavage system catalyzes the degradation of glycine. The H protein shuttles the methylamine group of glycine from the P protein to the T protein. This is Glycine cleavage system H protein from Hydrogenovibrio crunogenus (strain DSM 25203 / XCL-2) (Thiomicrospira crunogena).